Here is a 340-residue protein sequence, read N- to C-terminus: MIRGAPAPMAEPPPVVFCHDSPKRVLVSVIRTTPATPPCSSVGEPEPPPPLVPTSPGFSDFMVYPWRWGENAHNVTLSPGAAGGVVSAGLPVAAELPTLRGAPQSSASVAAVSGGEDEEEASSPDSGHLKDGIRRGRPRADTVRDLINEGEHSSSRIRCNICNRVFPREKSLQAHKRTHTGERPYLCDYPDCGKAFVQSGQLKTHQRLHTGEKPFVCSENGCLSRFTHANRHCPKHPYARLKREEPTDALSKHQSPDNKAAAEWLAKYWEMREQRTPTLKGKLVQKADQEQQDPLEYLQSDEEDDEKSGAQRRLQEQRERLHGALALIELANLTGAPLRQ.

Residues 101–140 (GAPQSSASVAAVSGGEDEEEASSPDSGHLKDGIRRGRPRA) are disordered. A compositionally biased stretch (basic and acidic residues) spans 127–140 (GHLKDGIRRGRPRA). 2 consecutive C2H2-type zinc fingers follow at residues 157–179 (IRCN…KRTH) and 185–209 (YLCD…QRLH). The disordered stretch occupies residues 280–317 (KGKLVQKADQEQQDPLEYLQSDEEDDEKSGAQRRLQEQ). Positions 299-332 (QSDEEDDEKSGAQRRLQEQRERLHGALALIELAN) form a coiled coil. Phosphoserine is present on serine 300. Over residues 307 to 317 (KSGAQRRLQEQ) the composition is skewed to basic and acidic residues.

It belongs to the krueppel C2H2-type zinc-finger protein family. In terms of tissue distribution, expressed in bone marrow and ovary.

The protein localises to the nucleus. In terms of biological role, transcriptional activator. Isoform 1 may be involved in transcriptional activation of erythroid genes. This chain is Zinc finger protein 367 (Znf367), found in Mus musculus (Mouse).